A 134-amino-acid polypeptide reads, in one-letter code: Cell division protein SepF (134 aa).

Belongs to the SepF family. Homodimer. Interacts with FtsZ.

The protein localises to the cytoplasm. Cell division protein that is part of the divisome complex and is recruited early to the Z-ring. Probably stimulates Z-ring formation, perhaps through the cross-linking of FtsZ protofilaments. Its function overlaps with FtsA. The protein is Cell division protein SepF of Caldanaerobacter subterraneus subsp. tengcongensis (strain DSM 15242 / JCM 11007 / NBRC 100824 / MB4) (Thermoanaerobacter tengcongensis).